The sequence spans 304 residues: GTPase Era (304 aa).

One can recognise an Era-type G domain in the interval 11–179 (YCGFIAIVGR…QKIVRKSLRE (169 aa)). The segment at 19 to 26 (GRPNVGKS) is G1. 19–26 (GRPNVGKS) provides a ligand contact to GTP. The G2 stretch occupies residues 45 to 49 (QTTRH). The G3 stretch occupies residues 66–69 (DTPG). GTP is bound by residues 66 to 70 (DTPGL) and 128 to 131 (NKVD). The segment at 128-131 (NKVD) is G4. A G5 region spans residues 158–160 (ISA). The 78-residue stretch at 210-287 (TGEELPYSVT…HLELWVKVKA (78 aa)) folds into the KH type-2 domain.

It belongs to the TRAFAC class TrmE-Era-EngA-EngB-Septin-like GTPase superfamily. Era GTPase family. As to quaternary structure, monomer.

The protein resides in the cytoplasm. Its subcellular location is the cell inner membrane. Its function is as follows. An essential GTPase that binds both GDP and GTP, with rapid nucleotide exchange. Plays a role in 16S rRNA processing and 30S ribosomal subunit biogenesis and possibly also in cell cycle regulation and energy metabolism. This Actinobacillus pleuropneumoniae serotype 5b (strain L20) protein is GTPase Era.